The chain runs to 225 residues: ATP-dependent Clp protease proteolytic subunit (225 aa).

Ser-123 (nucleophile) is an active-site residue. His-148 is an active-site residue.

It belongs to the peptidase S14 family. Fourteen ClpP subunits assemble into 2 heptameric rings which stack back to back to give a disk-like structure with a central cavity, resembling the structure of eukaryotic proteasomes.

The protein resides in the cytoplasm. It catalyses the reaction Hydrolysis of proteins to small peptides in the presence of ATP and magnesium. alpha-casein is the usual test substrate. In the absence of ATP, only oligopeptides shorter than five residues are hydrolyzed (such as succinyl-Leu-Tyr-|-NHMec, and Leu-Tyr-Leu-|-Tyr-Trp, in which cleavage of the -Tyr-|-Leu- and -Tyr-|-Trp bonds also occurs).. Cleaves peptides in various proteins in a process that requires ATP hydrolysis. Has a chymotrypsin-like activity. Plays a major role in the degradation of misfolded proteins. The sequence is that of ATP-dependent Clp protease proteolytic subunit from Chlorobium phaeovibrioides (strain DSM 265 / 1930) (Prosthecochloris vibrioformis (strain DSM 265)).